The sequence spans 702 residues: Phosphoglycerol transferase I (702 aa).

3 helical membrane passes run 2–22, 71–91, and 103–123; these read HWILALSLLLLLWLLVASPRL, FSGYIAVFIGMVLLSLSPLML, and GGAVFGAFVVMLLVSMAVSPV.

The protein belongs to the OpgB family.

It localises to the cell inner membrane. The catalysed reaction is a phosphatidylglycerol + a membrane-derived-oligosaccharide D-glucose = a 1,2-diacyl-sn-glycerol + a membrane-derived-oligosaccharide 6-(glycerophospho)-D-glucose.. The protein operates within glycan metabolism; osmoregulated periplasmic glucan (OPG) biosynthesis. Functionally, transfers a phosphoglycerol residue from phosphatidylglycerol to the membrane-bound nascent glucan backbones. This is Phosphoglycerol transferase I from Xanthomonas campestris pv. campestris (strain B100).